A 439-amino-acid chain; its full sequence is Uracil-regulated protein 1 (439 aa).

The tract at residues 1-24 (MLATEQSRPAECNGAHAHEKTEEV) is disordered. 268–272 (RVHDE) contacts GTP. The Zn(2+) site is built by C273, C284, and C286. Position 315-317 (315-317 (EGR)) interacts with GTP. The active-site Proton acceptor is D353. The active-site Nucleophile is R355. GTP-binding residues include S377 and K382.

Belongs to the GTP cyclohydrolase II family.

It is found in the cytoplasm. Its subcellular location is the nucleus. This chain is Uracil-regulated protein 1 (urg1), found in Schizosaccharomyces pombe (strain 972 / ATCC 24843) (Fission yeast).